A 473-amino-acid polypeptide reads, in one-letter code: Iron transporter SMF3 (473 aa).

2 helical membrane-spanning segments follow: residues 14-34 and 44-64; these read FIGPGILVSVAYMDPGNYATS and TLLFSIFISNIFAVLLQCLCV. Asparagine 87 carries N-linked (GlcNAc...) asparagine glycosylation. 9 consecutive transmembrane segments (helical) span residues 97-117, 119-139, 152-172, 198-218, 257-277, 297-317, 352-372, 373-393, and 448-468; these read AIIATDLAEVVGTAIALQILF, IPLTWGVLLTVLDVLVILMFY, FEFGVGILVIGTCICFVLELF, ALYISLGILGATVMPHSLYLG, LIISLFLIATFVNSAILIVAG, LLVHYISPAAGLIFALAMLCS, LIAIVPCLFVTLTMGEKGISD, ILNFSQVVLSLILPIVSAPLI, and VFVWALIGSLNCYLVISYLLG.

This sequence belongs to the NRAMP family.

It is found in the vacuole membrane. It localises to the endoplasmic reticulum membrane. Functionally, has a role in controlling the cellular iron ion levels. Mobilizes vacuolar stores of iron in conditions of low iron levels. This chain is Iron transporter SMF3 (SMF3), found in Saccharomyces cerevisiae (strain ATCC 204508 / S288c) (Baker's yeast).